Reading from the N-terminus, the 243-residue chain is Probable heat shock transcription factor (243 aa).

The DNA-binding element occupies 9-102 (INKFIRRLYK…GDNLLPCIQR (94 aa)). The segment at 121–164 (QLQDLLQYLNNQNFKLEGEIKSLKDRVDQQDCTINGLVQLLTRI) is involved in trimerization.

This sequence belongs to the HSF family. Homotrimer. Homotrimerization increases the affinity of HSF1 to DNA.

It is found in the nucleus. Its function is as follows. DNA-binding transcription factor that specifically binds heat shock promoter elements (HSE) and activates transcription. This chain is Probable heat shock transcription factor, found in Vairimorpha ceranae (strain BRL01) (Microsporidian parasite).